Here is a 359-residue protein sequence, read N- to C-terminus: Mitochondrial glutathione transporter SLC25A39 (359 aa).

The Mitochondrial intermembrane portion of the chain corresponds to 1 to 14 (MDDQDPGGISPLQQ). Solcar repeat units lie at residues 9 to 151 (ISPL…LKAF), 159 to 243 (SDLY…VKSW), and 253 to 347 (TSVG…GKSF). A helical transmembrane segment spans residues 15–35 (MVASGAGAVVTSLFMTPLDVV). Topologically, residues 36-121 (KVRLQSQRPS…VKIVRHEGTR (86 aa)) are mitochondrial matrix. Residues Cys-74, Cys-78, Cys-88, and Cys-94 each coordinate [2Fe-2S] cluster. Residues 122 to 142 (TLWSGLPATLVMTVPATAIYF) form a helical membrane-spanning segment. Topologically, residues 143 to 164 (TAYDQLKAFLCGQSLTSDLYAP) are mitochondrial intermembrane. Residues 165-185 (MVAGALARMGTVTVVSPLELV) form a helical membrane-spanning segment. Residues 186-214 (RTKLQAQHVSYRELASSVQAAVTQGGWRS) lie on the Mitochondrial matrix side of the membrane. Residues 215-235 (LWLGWGPTALRDVPFSALYWF) traverse the membrane as a helical segment. Topologically, residues 236 to 255 (NYELVKSWLSGLRPKDQTSV) are mitochondrial intermembrane. A helical membrane pass occupies residues 256–276 (GISFVAGGISGMVAATLTLPF). Over 277-317 (DVVKTQRQMSLGAVEAVRVKPPRVDSTWLLLRRIRAESGTR) the chain is Mitochondrial matrix. Residues 318-338 (GLFAGFLPRIIKAAPSCAIMI) traverse the membrane as a helical segment. Residues 339–359 (STYEFGKSFFQRLNQEQPLGR) are Mitochondrial intermembrane-facing.

This sequence belongs to the mitochondrial carrier (TC 2.A.29) family. Cleaved and degraded by AFG3L2; degradation by AFG3L2 is regulated by the ability of SLC25A39 to bind iron-sulfur. In absence of mitochondrial glutathione, SLC25A39 binds iron-sulfur, preventing cleavage and degradation by AFG3L2. The presence of mitochondrial glutathione prevents iron-sulfur-binding to SLC25A39, promoting cleavage and degradation by AFG3L2. In terms of tissue distribution, abundant expression in bone marrow, spleen, testis and kidney.

It is found in the mitochondrion inner membrane. The enzyme catalyses glutathione(in) = glutathione(out). Its activity is regulated as follows. The activity of SLC25A39 is regulated by levels of mitochondrial glutathione via its ability to bind [2Fe-2S] iron-sulfur cluster. Upon physiological levels of mitochondrial glutathione, glutathione prevents iron-sulfur-binding to SLC25A39 promoting cleavage and degradation by AFG3L2. Upon depletion of mitochondrial glutathione, SLC25A39 binds iron-sulfur, preventing cleavage and degradation by AFG3L2. Mitochondrial transporter required for glutathione import into mitochondria. Glutathione, which plays key roles in oxidative metabolism, is produced exclusively in the cytosol and is imported in many organelles. Mitochondrial glutathione is required for the activity and stability of proteins containing iron-sulfur clusters, as well as erythropoiesis. This chain is Mitochondrial glutathione transporter SLC25A39, found in Mus musculus (Mouse).